Consider the following 189-residue polypeptide: Cytochrome b6-f complex subunit 4 (189 aa).

The next 3 membrane-spanning stretches (helical) occupy residues 36-56 (LSYIFPVVILGTIACTIGLAV), 103-123 (LLGVLLMASVPAGSLTVPFLE), and 139-159 (TVSLIGTAVALWLGIGAALPI).

The protein belongs to the cytochrome b family. PetD subfamily. As to quaternary structure, the 4 large subunits of the cytochrome b6-f complex are cytochrome b6, subunit IV (17 kDa polypeptide, petD), cytochrome f and the Rieske protein, while the 4 small subunits are petG, petL, petM and petN. The complex functions as a dimer.

It is found in the plastid. Its subcellular location is the chloroplast thylakoid membrane. In terms of biological role, component of the cytochrome b6-f complex, which mediates electron transfer between photosystem II (PSII) and photosystem I (PSI), cyclic electron flow around PSI, and state transitions. This is Cytochrome b6-f complex subunit 4 from Pinus koraiensis (Korean pine).